Here is a 321-residue protein sequence, read N- to C-terminus: MEWTQIFIPIVVSFAITVSVMPLFIGYFQMKKQGQVTREDGPTWHSVKTGTPTMGGVVFLVASLITSLAMGLFFHQFTPSLLIILFILVLYGLLGYLDDFIKVFKKRNMGLNSRQKLIGQIFGGLVFYFVYRSEGFSDTLDLFGVAEVPLGIFYGVFIIFWLVGFSNAVNLTDGIDGLVAGLGTISFGTYAIIAWKQQQFDVVIICLSVIGGLIGFFPYNRKPAKIFMGDVGSLALGGLLAAISIILHQEWTLLLIGLVYVCETASVILQVASFKLFGRRIFKMSPIHHHFEMCGWSEWKIDFVFWSVGLICSGITLWILF.

The next 10 membrane-spanning stretches (helical) occupy residues 6 to 26, 54 to 74, 77 to 97, 117 to 137, 143 to 163, 175 to 195, 200 to 220, 226 to 246, 251 to 271, and 301 to 321; these read IFIP…LFIG, MGGV…GLFF, FTPS…LGYL, LIGQ…EGFS, FGVA…FWLV, IDGL…IIAW, FDVV…FPYN, IFMG…ISII, WTLL…ILQV, and IDFV…WILF.

The protein belongs to the glycosyltransferase 4 family. MraY subfamily. Requires Mg(2+) as cofactor.

It is found in the cell membrane. It carries out the reaction UDP-N-acetyl-alpha-D-muramoyl-L-alanyl-gamma-D-glutamyl-L-lysyl-D-alanyl-D-alanine + di-trans,octa-cis-undecaprenyl phosphate = Mur2Ac(oyl-L-Ala-gamma-D-Glu-L-Lys-D-Ala-D-Ala)-di-trans,octa-cis-undecaprenyl diphosphate + UMP. It functions in the pathway cell wall biogenesis; peptidoglycan biosynthesis. Catalyzes the initial step of the lipid cycle reactions in the biosynthesis of the cell wall peptidoglycan: transfers peptidoglycan precursor phospho-MurNAc-pentapeptide from UDP-MurNAc-pentapeptide onto the lipid carrier undecaprenyl phosphate, yielding undecaprenyl-pyrophosphoryl-MurNAc-pentapeptide, known as lipid I. In Enterococcus faecalis (strain ATCC 700802 / V583), this protein is Phospho-N-acetylmuramoyl-pentapeptide-transferase.